The sequence spans 443 residues: Xaa-Pro dipeptidase (443 aa).

Mn(2+)-binding residues include Asp-246, Asp-257, His-339, Glu-384, and Glu-423.

It belongs to the peptidase M24B family. Bacterial-type prolidase subfamily. Mn(2+) is required as a cofactor.

It catalyses the reaction Xaa-L-Pro dipeptide + H2O = an L-alpha-amino acid + L-proline. Splits dipeptides with a prolyl residue in the C-terminal position. The protein is Xaa-Pro dipeptidase of Erwinia tasmaniensis (strain DSM 17950 / CFBP 7177 / CIP 109463 / NCPPB 4357 / Et1/99).